The following is a 784-amino-acid chain: Endonuclease MutS2 (784 aa).

Position 335–342 (335–342 (GPNTGGKT)) interacts with ATP. A disordered region spans residues 527–546 (ERSKKQAEEDEARAHSAREE). A Smr domain is found at 709–784 (LDLRGERYED…GTGVTVVELK (76 aa)).

Belongs to the DNA mismatch repair MutS family. MutS2 subfamily. In terms of assembly, homodimer. Binds to stalled ribosomes, contacting rRNA.

Endonuclease that is involved in the suppression of homologous recombination and thus may have a key role in the control of bacterial genetic diversity. Its function is as follows. Acts as a ribosome collision sensor, splitting the ribosome into its 2 subunits. Detects stalled/collided 70S ribosomes which it binds and splits by an ATP-hydrolysis driven conformational change. Acts upstream of the ribosome quality control system (RQC), a ribosome-associated complex that mediates the extraction of incompletely synthesized nascent chains from stalled ribosomes and their subsequent degradation. Probably generates substrates for RQC. The polypeptide is Endonuclease MutS2 (Geobacillus thermodenitrificans (strain NG80-2)).